Here is a 569-residue protein sequence, read N- to C-terminus: Pyruvate decarboxylase (569 aa).

Pyruvate-binding residues include aspartate 38 and histidine 124. Residues threonine 398 and 421-423 contribute to the thiamine diphosphate site; that span reads GSI. Position 451 (aspartate 451) interacts with Mg(2+). Thiamine diphosphate is bound by residues 452-453 and 478-483; these read GS and NQGYTI. Asparagine 478 and glycine 480 together coordinate Mg(2+). Residue glutamate 484 participates in pyruvate binding.

Belongs to the TPP enzyme family. In terms of assembly, homotetramer. Mg(2+) serves as cofactor. Thiamine diphosphate is required as a cofactor.

It carries out the reaction a 2-oxocarboxylate + H(+) = an aldehyde + CO2. It catalyses the reaction pyruvate + H(+) = acetaldehyde + CO2. In Aspergillus terreus (strain NIH 2624 / FGSC A1156), this protein is Pyruvate decarboxylase (pdcA).